Consider the following 249-residue polypeptide: tRNA (guanine-N(1)-)-methyltransferase (249 aa).

Residues glycine 113 and isoleucine 133–leucine 138 contribute to the S-adenosyl-L-methionine site.

This sequence belongs to the RNA methyltransferase TrmD family. In terms of assembly, homodimer.

The protein localises to the cytoplasm. It catalyses the reaction guanosine(37) in tRNA + S-adenosyl-L-methionine = N(1)-methylguanosine(37) in tRNA + S-adenosyl-L-homocysteine + H(+). Its function is as follows. Specifically methylates guanosine-37 in various tRNAs. In Aeromonas hydrophila subsp. hydrophila (strain ATCC 7966 / DSM 30187 / BCRC 13018 / CCUG 14551 / JCM 1027 / KCTC 2358 / NCIMB 9240 / NCTC 8049), this protein is tRNA (guanine-N(1)-)-methyltransferase.